Consider the following 317-residue polypeptide: tRNA dimethylallyltransferase (317 aa).

G14–T21 contacts ATP. T16–T21 is a binding site for substrate. Positions D39–Q42 are interaction with substrate tRNA.

It belongs to the IPP transferase family. Monomer. It depends on Mg(2+) as a cofactor.

It carries out the reaction adenosine(37) in tRNA + dimethylallyl diphosphate = N(6)-dimethylallyladenosine(37) in tRNA + diphosphate. In terms of biological role, catalyzes the transfer of a dimethylallyl group onto the adenine at position 37 in tRNAs that read codons beginning with uridine, leading to the formation of N6-(dimethylallyl)adenosine (i(6)A). This is tRNA dimethylallyltransferase from Bacillus cereus (strain Q1).